Consider the following 417-residue polypeptide: Gamma-glutamyl phosphate reductase (417 aa).

The protein belongs to the gamma-glutamyl phosphate reductase family.

The protein resides in the cytoplasm. The enzyme catalyses L-glutamate 5-semialdehyde + phosphate + NADP(+) = L-glutamyl 5-phosphate + NADPH + H(+). Its pathway is amino-acid biosynthesis; L-proline biosynthesis; L-glutamate 5-semialdehyde from L-glutamate: step 2/2. In terms of biological role, catalyzes the NADPH-dependent reduction of L-glutamate 5-phosphate into L-glutamate 5-semialdehyde and phosphate. The product spontaneously undergoes cyclization to form 1-pyrroline-5-carboxylate. The protein is Gamma-glutamyl phosphate reductase of Escherichia coli (strain K12 / MC4100 / BW2952).